The following is a 319-amino-acid chain: tRNA pseudouridine synthase B (319 aa).

Aspartate 49 functions as the Nucleophile in the catalytic mechanism.

Belongs to the pseudouridine synthase TruB family. Type 1 subfamily.

It catalyses the reaction uridine(55) in tRNA = pseudouridine(55) in tRNA. Functionally, responsible for synthesis of pseudouridine from uracil-55 in the psi GC loop of transfer RNAs. The polypeptide is tRNA pseudouridine synthase B (Bartonella henselae (strain ATCC 49882 / DSM 28221 / CCUG 30454 / Houston 1) (Rochalimaea henselae)).